A 105-amino-acid chain; its full sequence is Phosphoribosyl-ATP pyrophosphatase (105 aa).

Belongs to the PRA-PH family.

It is found in the cytoplasm. The catalysed reaction is 1-(5-phospho-beta-D-ribosyl)-ATP + H2O = 1-(5-phospho-beta-D-ribosyl)-5'-AMP + diphosphate + H(+). It functions in the pathway amino-acid biosynthesis; L-histidine biosynthesis; L-histidine from 5-phospho-alpha-D-ribose 1-diphosphate: step 2/9. The protein is Phosphoribosyl-ATP pyrophosphatase of Ruthia magnifica subsp. Calyptogena magnifica.